The primary structure comprises 1481 residues: DNA excision repair protein ERCC-6 (1481 aa).

Residues 1–506 (MFHEEVPNST…GFLFKKLFKY (506 aa)) form an N-terminal domain; essential for its chromatin remodeling activity region. At Ser158 the chain carries Phosphoserine; by CDK2. Residue Lys170 is modified to N6-methylated lysine; by EHMT2. Lys256 participates in a covalent cross-link: Glycyl lysine isopeptide (Lys-Gly) (interchain with G-Cter in SUMO2). Residue Lys298 is modified to N6-methylated lysine; by EHMT2. Residues 309-452 (AIETKADQRS…RKVARRQDDG (144 aa)) are disordered. The segment covering 327–337 (RLKKHSRKLQR) has biased composition (basic residues). Positions 353–363 (KPLEPEVRPEA) are enriched in basic and acidic residues. Acidic residues-rich tracts occupy residues 378-390 (DGEEEEEQEEEEG) and 420-435 (EIDDDFFPSSEEEDEA). A phosphoserine mark is found at Ser428 and Ser429. Position 444 is an N6-methylated lysine; by EHMT2 (Lys444). 2 positions are modified to phosphoserine: Ser482 and Ser485. Positions 515 to 691 (WELHCQQAGG…WSLFDFIFPG (177 aa)) constitute a Helicase ATP-binding domain. Position 528-535 (528-535 (DEMGLGKT)) interacts with ATP. The short motif at 642-645 (DEGH) is the DEAH box element. One can recognise a Helicase C-terminal domain in the interval 839–998 (VVESLLKIWH…RRFFKSNDLY (160 aa)). Disordered regions lie at residues 1040–1096 (LGTD…NRAS), 1114–1238 (SVMS…DRSS), and 1307–1372 (GHRG…GAPS). Lys1047 is modified (N6-methylated lysine; by EHMT2). Over residues 1138–1147 (ASTSEKQGSS) the composition is skewed to polar residues. Over residues 1192 to 1201 (QPKQKAKNSK) the composition is skewed to basic residues. A compositionally biased stretch (basic and acidic residues) spans 1202 to 1212 (HCRDAKFEGTR). Over residues 1330-1345 (LPVQHPSSLTEKTQNN) the composition is skewed to polar residues. Residues 1346 to 1364 (MKKEGKAHTPEHFSGKEDG) show a composition bias toward basic and acidic residues. A CSA-interacting motif (CIM) motif is present at residues 1373–1385 (SSSLLARMRARNH). The interval 1387-1416 (ILPERLESDSEHLAEAAAVPPCGTEHDDLL) is ubiquitin-binding domain (UBD). Residues 1417–1481 (VDMRNFIAFQ…GIWKLKPEYC (65 aa)) form a winged-helix domain (WHD) region. The segment at 1434 to 1481 (STQEILQEFESKLSVAQSCVFRELLRNLCNFHRTPGGEGIWKLKPEYC) is essential for its interaction with RNA polymerase II, transcription-coupled nucleotide excision repair activity, association with chromatin after UV irradiation and for mediating the UV-induced translocation of ERRC8 to the nuclear matrix.

This sequence belongs to the SNF2/RAD54 helicase family. In terms of assembly, homodimer. Binds DNA. Interacts with ERCC8. Interacts with RNA polymerase II; interaction is enhanced by UV irradiation. Component of the B-WICH complex, at least composed of SMARCA5/SNF2H, BAZ1B/WSTF, SF3B1, DEK, MYO1C, ERCC6, MYBBP1A and DDX21. Interacts with KIAA1530/UVSSA. Interacts with ELOA and CUL5; the interaction is induced by DNA damaging agents or by inhibitors of RNA polymerase II elongation. Interacts (via WHD region) with RIF1. Interacts with SMARCC2/BAF170, SMARCB1/BAF47 and the neuron-specific chromatin remodeling complex (nBAF complex). Interacts with ERCC5/XPG (via C-terminus); the interaction stimulates ERCC6/CSB binding to DNA repair bubble and ERCC6/CSB ATPase activity. May form a complex composed of RNA polymerase II, ERCC6/CSB and ERCC5/XPG which associates with the DNA repair bubble during transcription-coupled nucleotide excision repair. Interacts with CAND1, CSTF1, DDX3X, DDX5, DDX17, DDX23, DHX36, HDAC1, HNRNPU, MTA2, PRPF3, PSMD3, RBBP4, SFPQ, SMARCA1, SMARCA2, TOP1, USP7 and XRCC5. Phosphorylated in a cell cycle-dependent manner at Ser-158 by cyclin A-CDK2 in response to DNA damage. Phosphorylation at this site promotes the intramolecular interaction of the N-terminal domain with the helicase ATP-binding domain, thereby probably releasing the inhibitory effect of the N-terminal domain on its ATPase activity. Phosphorylation is essential for its chromatin remodeling activity. Post-translationally, ubiquitinated at the C-terminus. Ubiquitination by the CSA complex leads to ERCC6 proteasomal degradation in a UV-dependent manner. Stabilized following interaction with KIAA1530/UVSSA, which promotes recruitment of deubiquitinating enzyme USP7, leading to deubiquitination of ERCC6 thereby preventing UV-induced degradation of ERCC6 by the proteasome.

It is found in the nucleus. The protein resides in the chromosome. It carries out the reaction ATP + H2O = ADP + phosphate + H(+). Functionally, essential factor involved in transcription-coupled nucleotide excision repair (TC-NER), a process during which RNA polymerase II-blocking lesions are rapidly removed from the transcribed strand of active genes. Plays a central role in the initiation of the TC-NER process: specifically recognizes and binds RNA polymerase II stalled at a lesion, and mediates recruitment of ERCC8/CSA, initiating DNA damage excision by TFIIH recruitment. Upon DNA-binding, it locally modifies DNA conformation by wrapping the DNA around itself, thereby modifying the interface between stalled RNA polymerase II and DNA. Acts as a chromatin remodeler at DSBs; DNA-dependent ATPase-dependent activity is essential for this function. Plays an important role in regulating the choice of the DNA double-strand breaks (DSBs) repair pathway and G2/M checkpoint activation; DNA-dependent ATPase activity is essential for this function. Regulates the DNA repair pathway choice by inhibiting non-homologous end joining (NHEJ), thereby promoting the homologous recombination (HR)-mediated repair of DSBs during the S/G2 phases of the cell cycle. Mediates the activation of the ATM- and CHEK2-dependent DNA damage responses thus preventing premature entry of cells into mitosis following the induction of DNA DSBs. Remodels chromatin by evicting histones from chromatin flanking DSBs, limiting RIF1 accumulation at DSBs thereby promoting BRCA1-mediated HR. Required for stable recruitment of ELOA and CUL5 to DNA damage sites. Also involved in UV-induced translocation of ERCC8 to the nuclear matrix. Essential for neuronal differentiation and neuritogenesis; regulates transcription and chromatin remodeling activities required during neurogenesis. The sequence is that of DNA excision repair protein ERCC-6 (Ercc6) from Mus musculus (Mouse).